Reading from the N-terminus, the 498-residue chain is MELLQLWSALIILVVTYTISLLINQWRKPKPQGKFPPGPPKLPLIGHLHLLWGKLPQHALASVAKEYGPVAHVQLGEVFSVVLSSREATKEAMKLVDPACANRFESIGTRIMWYDNEDIIFSPYSEHWRQMRKICVSELLSSRNVRSFGFIRQDEVSRLLRHLRSSAGAAVDMTERIETLTCSIICRAAFGSVIRDNAELVGLVKDALSMASGFELADMFPSSKLLNLLCWNKSKLWRMRRRVDTILEAIVDEHKFKKSGEFGGEDIIDVLFRMQKDTQIKVPITTNSIKAFIFDTFSAGTETSSTTTLWVLAELMRNPAVMAKAQAEVRAALKEKTNWDVDDVQELKYMKSVVKETMRMHPPIPLIPRSCREECVVNGYTIPNKARIMINVWSMGRNPLYWEKPDTFWPERFDQVSKDFMGNDFEFVPFGAGRRICPGLNFGLANVEVPLAQLLYHFDWKLAEGMKPSDMDMSEAEGLTGILKNNLLLVPTPYDPSS.

A helical; Signal-anchor for type II membrane protein transmembrane segment spans residues 3-23; it reads LLQLWSALIILVVTYTISLLI. Heme is bound at residue cysteine 437.

Belongs to the cytochrome P450 family. Heme is required as a cofactor.

Its subcellular location is the endoplasmic reticulum membrane. The catalysed reaction is (4S)-limonene + reduced [NADPH--hemoprotein reductase] + O2 = (1S,6R)-isopiperitenol + oxidized [NADPH--hemoprotein reductase] + H2O + H(+). In terms of biological role, hydroxylates (-)-(4S)-limonene to (-)-trans-isopiperitenol, a precursor of (-)-menthol, responsible for the cooling sensation of peppermint. Fluorinated substrate analogs are hydroxylated with the same regio- and stereochemistry. The chain is Cytochrome P450 71D15 (CYP71D15) from Mentha piperita (Peppermint).